A 428-amino-acid polypeptide reads, in one-letter code: Enolase (428 aa).

Residue Gln173 participates in (2R)-2-phosphoglycerate binding. The Proton donor role is filled by Glu217. Positions 253, 294, and 320 each coordinate Mg(2+). (2R)-2-phosphoglycerate is bound by residues Lys345, Arg374, Ser375, and Lys396. The Proton acceptor role is filled by Lys345.

The protein belongs to the enolase family. Requires Mg(2+) as cofactor.

It is found in the cytoplasm. The protein resides in the secreted. The protein localises to the cell surface. It carries out the reaction (2R)-2-phosphoglycerate = phosphoenolpyruvate + H2O. It functions in the pathway carbohydrate degradation; glycolysis; pyruvate from D-glyceraldehyde 3-phosphate: step 4/5. In terms of biological role, catalyzes the reversible conversion of 2-phosphoglycerate (2-PG) into phosphoenolpyruvate (PEP). It is essential for the degradation of carbohydrates via glycolysis. The chain is Enolase from Methanosarcina barkeri (strain Fusaro / DSM 804).